Consider the following 458-residue polypeptide: Ribosomal protein uS12 methylthiotransferase RimO (458 aa).

Residues 8 to 119 (PTVAFAHLGC…IVDVLQRVEV (112 aa)) enclose the MTTase N-terminal domain. 6 residues coordinate [4Fe-4S] cluster: C17, C53, C82, C157, C161, and C164. Positions 143–372 (TTDQAVAFLK…MALQQPISAE (230 aa)) constitute a Radical SAM core domain. A TRAM domain is found at 375–446 (SRWVGRTVDV…IYDLNGQMVG (72 aa)).

The protein belongs to the methylthiotransferase family. RimO subfamily. [4Fe-4S] cluster is required as a cofactor.

The protein localises to the cytoplasm. The catalysed reaction is L-aspartate(89)-[ribosomal protein uS12]-hydrogen + (sulfur carrier)-SH + AH2 + 2 S-adenosyl-L-methionine = 3-methylsulfanyl-L-aspartate(89)-[ribosomal protein uS12]-hydrogen + (sulfur carrier)-H + 5'-deoxyadenosine + L-methionine + A + S-adenosyl-L-homocysteine + 2 H(+). Functionally, catalyzes the methylthiolation of an aspartic acid residue of ribosomal protein uS12. The sequence is that of Ribosomal protein uS12 methylthiotransferase RimO from Synechococcus sp. (strain CC9605).